A 453-amino-acid polypeptide reads, in one-letter code: tRNA modification GTPase MnmE (453 aa).

Arginine 22, glutamate 79, and lysine 119 together coordinate (6S)-5-formyl-5,6,7,8-tetrahydrofolate. Positions 215–376 constitute a TrmE-type G domain; it reads GMKVVIAGRP…LKLHLKSLMG (162 aa). A K(+)-binding site is contributed by asparagine 225. GTP is bound by residues 225–230, 244–250, 269–272, and 334–337; these read NAGKSS, TEIAGTT, DTAG, and NKAD. Serine 229 serves as a coordination point for Mg(2+). Residues threonine 244, isoleucine 246, and threonine 249 each contribute to the K(+) site. Position 250 (threonine 250) interacts with Mg(2+). Lysine 453 contributes to the (6S)-5-formyl-5,6,7,8-tetrahydrofolate binding site.

The protein belongs to the TRAFAC class TrmE-Era-EngA-EngB-Septin-like GTPase superfamily. TrmE GTPase family. Homodimer. Heterotetramer of two MnmE and two MnmG subunits. K(+) serves as cofactor.

It localises to the cytoplasm. In terms of biological role, exhibits a very high intrinsic GTPase hydrolysis rate. Involved in the addition of a carboxymethylaminomethyl (cmnm) group at the wobble position (U34) of certain tRNAs, forming tRNA-cmnm(5)s(2)U34. This chain is tRNA modification GTPase MnmE, found in Shewanella sp. (strain W3-18-1).